Reading from the N-terminus, the 599-residue chain is Sulfite reductase [NADPH] flavoprotein alpha-component (599 aa).

Residues 64–202 (VTLISASQTG…AASEWRARVV (139 aa)) form the Flavodoxin-like domain. FMN is bound by residues 70 to 75 (SQTGNA), 117 to 120 (STQG), and 153 to 162 (LGDTSYEFFC). The FAD-binding FR-type domain occupies 234–448 (DAPLIATLSV…IEHNDNFRLP (215 aa)). FAD contacts are provided by residues Thr-322, Ala-356, 386–389 (RLYS), 404–406 (TVG), Tyr-410, and 419–422 (GGAS). NADP(+)-binding positions include 519–520 (SR), 525–529 (KIYVQ), and Asp-561. Residue Tyr-599 participates in FAD binding.

This sequence belongs to the NADPH-dependent sulphite reductase flavoprotein subunit CysJ family. In the N-terminal section; belongs to the flavodoxin family. It in the C-terminal section; belongs to the flavoprotein pyridine nucleotide cytochrome reductase family. In terms of assembly, alpha(8)-beta(8). The alpha component is a flavoprotein, the beta component is a hemoprotein. It depends on FAD as a cofactor. Requires FMN as cofactor.

It catalyses the reaction hydrogen sulfide + 3 NADP(+) + 3 H2O = sulfite + 3 NADPH + 4 H(+). The protein operates within sulfur metabolism; hydrogen sulfide biosynthesis; hydrogen sulfide from sulfite (NADPH route): step 1/1. Component of the sulfite reductase complex that catalyzes the 6-electron reduction of sulfite to sulfide. This is one of several activities required for the biosynthesis of L-cysteine from sulfate. The flavoprotein component catalyzes the electron flow from NADPH -&gt; FAD -&gt; FMN to the hemoprotein component. In Salmonella typhimurium (strain LT2 / SGSC1412 / ATCC 700720), this protein is Sulfite reductase [NADPH] flavoprotein alpha-component.